We begin with the raw amino-acid sequence, 253 residues long: Tetraspanin-3 (253 aa).

Residues 1–11 (MGQCGITSSKT) lie on the Cytoplasmic side of the membrane. The chain crosses the membrane as a helical span at residues 12 to 32 (VLVFLNLIFWGAAGILCYVGA). Residues 33–50 (YVFITYDDYDHFFEDVYT) are Extracellular-facing. A helical transmembrane segment spans residues 51 to 71 (LIPAVVIIAVGALLFIIGLIG). Over 72–85 (CCATIRESRCGLAT) the chain is Cytoplasmic. The chain crosses the membrane as a helical span at residues 86–106 (FVIILLLVFVTEVVVVVLGYV). Topologically, residues 107–212 (YRAKVENEVD…KKLQEIMMHV (106 aa)) are extracellular. 4 N-linked (GlcNAc...) asparagine glycosylation sites follow: N127, N152, N167, and N183. Residues 213–233 (IWAALAFAAIQLLGMLCACIV) form a helical membrane-spanning segment. Over 234–253 (LCRRSRDPAYELLITGGTYA) the chain is Cytoplasmic.

Belongs to the tetraspanin (TM4SF) family. Interacts with claudin-11/CLDN11 and integrins.

It localises to the membrane. Functionally, regulates the proliferation and migration of oligodendrocytes, a process essential for normal myelination and repair. The chain is Tetraspanin-3 (TSPAN3) from Homo sapiens (Human).